We begin with the raw amino-acid sequence, 73 residues long: Signaling peptide TAXIMIN 2 (73 aa).

An N-terminal signal peptide occupies residues 1–27 (MGDCRPLGFLIGLPFALVALVLALVGA).

Confined to the vasculature of various organs, including seedling roots, leaves, cotyledons, sepals and petals. Also accumulates in root hair cells.

It is found in the secreted. In terms of biological role, signaling peptide involved in the regulation of lateral organs separation. The polypeptide is Signaling peptide TAXIMIN 2 (Arabidopsis thaliana (Mouse-ear cress)).